Reading from the N-terminus, the 61-residue chain is Metallothionein-2 (61 aa).

An N-acetylmethionine modification is found at methionine 1. A beta region spans residues 1-29; that stretch reads MDPNCSCTAGESCTCAGSCKCKDCKCASC. A divalent metal cation contacts are provided by cysteine 5, cysteine 7, cysteine 13, cysteine 15, cysteine 19, cysteine 21, cysteine 24, cysteine 26, cysteine 29, cysteine 33, cysteine 34, cysteine 36, cysteine 37, cysteine 41, cysteine 44, cysteine 48, cysteine 50, and cysteine 57. The alpha stretch occupies residues 30 to 61; sequence KKSCCSCCPVGCAKCAQGCVCKGASDKCSCCA. Serine 58 carries the phosphoserine modification. Cysteine 59 and cysteine 60 together coordinate a divalent metal cation.

This sequence belongs to the metallothionein superfamily. Type 1 family. As to quaternary structure, interacts with EOLA1.

In terms of biological role, metallothioneins have a high content of cysteine residues that bind various heavy metals; these proteins are transcriptionally regulated by both heavy metals and glucocorticoids. This is Metallothionein-2 (MT2A) from Ovis aries (Sheep).